A 71-amino-acid polypeptide reads, in one-letter code: Putative membrane protein insertion efficiency factor (71 aa).

It belongs to the UPF0161 family.

Its subcellular location is the cell inner membrane. Could be involved in insertion of integral membrane proteins into the membrane. The polypeptide is Putative membrane protein insertion efficiency factor (Nitrosospira multiformis (strain ATCC 25196 / NCIMB 11849 / C 71)).